A 100-amino-acid chain; its full sequence is Small ribosomal subunit protein uS14 (100 aa).

The protein belongs to the universal ribosomal protein uS14 family. In terms of assembly, part of the 30S ribosomal subunit. Contacts proteins S3 and S10.

In terms of biological role, binds 16S rRNA, required for the assembly of 30S particles and may also be responsible for determining the conformation of the 16S rRNA at the A site. This chain is Small ribosomal subunit protein uS14, found in Nostoc sp. (strain PCC 7120 / SAG 25.82 / UTEX 2576).